Reading from the N-terminus, the 893-residue chain is Translation initiation factor IF-2 (893 aa).

Disordered regions lie at residues 135 to 169 (KAKAKADAEAKAKAKVLTEKPVQESAEDKAAKAEE) and 201 to 300 (ENEK…ESMD). Over residues 201–224 (ENEKRWAEEEKARKEAEKTVDHHV) the composition is skewed to basic and acidic residues. The segment covering 251-265 (PSANAGNNANANAGA) has biased composition (low complexity). Positions 393 to 562 (SRAPVVTIMG…LLEAEVLELK (170 aa)) constitute a tr-type G domain. Residues 402–409 (GHVDHGKT) are G1. 402–409 (GHVDHGKT) is a binding site for GTP. The interval 427–431 (GITQH) is G2. The tract at residues 448-451 (DTPG) is G3. GTP is bound by residues 448 to 452 (DTPGH) and 502 to 505 (NKMD). Residues 502-505 (NKMD) form a G4 region. The segment at 538-540 (SAK) is G5.

This sequence belongs to the TRAFAC class translation factor GTPase superfamily. Classic translation factor GTPase family. IF-2 subfamily.

It is found in the cytoplasm. In terms of biological role, one of the essential components for the initiation of protein synthesis. Protects formylmethionyl-tRNA from spontaneous hydrolysis and promotes its binding to the 30S ribosomal subunits. Also involved in the hydrolysis of GTP during the formation of the 70S ribosomal complex. In Shewanella halifaxensis (strain HAW-EB4), this protein is Translation initiation factor IF-2.